The following is a 192-amino-acid chain: Cytochrome c oxidase assembly factor 8 (192 aa).

The transit peptide at 1–26 (MAALRPGSRALRRLLCRSFSGGGGVR) directs the protein to the mitochondrion.

This sequence belongs to the COA8 family. N-terminal mitochondrial targeting sequence is cleaved from the mature protein once in the mitochondrion. Post-translationally, in normal conditions, the cytoplasmic precursor protein is rapidly degraded by the ubiquitination-proteasome system (UPS). Oxidative stress induces protein stabilization and import into mitochondria where it protects COX from degradation. As to expression, expressed in atherosclerotic smooth muscle cells (at protein level). Expressed in aorta, brain, heart, kidney, liver, lung and spleen. Isoform 1 is strongly expressed in Kidney. Isoform 2 is strongly expressed in brain.

It is found in the mitochondrion inner membrane. In terms of biological role, required for cytochrome c complex (COX) IV assembly and function Protects COX assembly from oxidation-induced degradation, COX being the terminal component of the mitochondrial respiratory chain. This is Cytochrome c oxidase assembly factor 8 (Coa8) from Mus musculus (Mouse).